A 230-amino-acid chain; its full sequence is Protein LURP-one-related 11 (230 aa).

It belongs to the LOR family.

Functionally, might be related to the phospholipid scramblase and tubby-like superfamily of membrane tethered transcription factors. The protein is Protein LURP-one-related 11 of Arabidopsis thaliana (Mouse-ear cress).